A 686-amino-acid chain; its full sequence is Chromatin modification-related protein EAF1 (686 aa).

The tract at residues 71–97 (QMKRRQNDHHNQGPPPKVQKSTVDSLK) is disordered. In terms of domain architecture, HSA spans 202–280 (FKFIRKSKKK…DKSIIRNLPV (79 aa)). In terms of domain architecture, Myb-like spans 354 to 418 (IPTIWLPEDD…FERYIQLNDK (65 aa)). Disordered stretches follow at residues 493–517 (RKSTAELQANQNVTEPKPNSDRIPT), 544–617 (ARMV…QQRR), and 657–686 (QQGYGVPSSPVPPHQKNQTASPMSGSPNNA). The segment covering 497 to 506 (AELQANQNVT) has biased composition (polar residues). Residues 554–568 (APAPAPAPPPPPPPK) are compositionally biased toward pro residues. The segment covering 574–588 (TTPNGTPLTNEQIQH) has biased composition (polar residues). The segment covering 599–613 (LQQQQQQQQQQQHQQ) has biased composition (low complexity). Residues 671 to 686 (QKNQTASPMSGSPNNA) show a composition bias toward polar residues.

This sequence belongs to the EAF1 family. Component of the NuA4 histone acetyltransferase complex.

It localises to the nucleus. In terms of biological role, component of the NuA4 histone acetyltransferase complex which is involved in transcriptional activation of selected genes principally by acetylation of nucleosomal histone H4 and H2A. The NuA4 complex is also involved in DNA repair. This chain is Chromatin modification-related protein EAF1 (VID21), found in Candida albicans (strain SC5314 / ATCC MYA-2876) (Yeast).